Reading from the N-terminus, the 260-residue chain is Hydroxyethylthiazole kinase 1 (260 aa).

Substrate is bound at residue methionine 39. ATP contacts are provided by arginine 115 and threonine 160. Glycine 187 is a substrate binding site.

Belongs to the Thz kinase family. Mg(2+) is required as a cofactor.

It catalyses the reaction 5-(2-hydroxyethyl)-4-methylthiazole + ATP = 4-methyl-5-(2-phosphooxyethyl)-thiazole + ADP + H(+). It participates in cofactor biosynthesis; thiamine diphosphate biosynthesis; 4-methyl-5-(2-phosphoethyl)-thiazole from 5-(2-hydroxyethyl)-4-methylthiazole: step 1/1. Functionally, catalyzes the phosphorylation of the hydroxyl group of 4-methyl-5-beta-hydroxyethylthiazole (THZ). The sequence is that of Hydroxyethylthiazole kinase 1 from Streptococcus pneumoniae (strain 70585).